Reading from the N-terminus, the 114-residue chain is Pro-FMRFamide-related neuropeptide FF (114 aa).

A signal peptide spans Met-1–Thr-21. Residues Glu-22–Pro-69 constitute a propeptide that is removed on maturation. Phe-82 carries the post-translational modification Phenylalanine amide. The propeptide occupies Ser-85–Arg-100. Phe-111 carries the post-translational modification Phenylalanine amide.

This sequence belongs to the FARP (FMRFamide related peptide) family.

The protein localises to the secreted. In terms of biological role, morphine modulating peptides. Have wide-ranging physiologic effects, including the modulation of morphine-induced analgesia, elevation of arterial blood pressure, and increased somatostatin secretion from the pancreas. Neuropeptide FF potentiates and sensitizes ASIC1 and ASIC3 channels. The polypeptide is Pro-FMRFamide-related neuropeptide FF (Npff) (Mus musculus (Mouse)).